The primary structure comprises 322 residues: Ribonucleoside-diphosphate reductase small subunit (322 aa).

Fe cation is bound by residues D70, E101, and H104. Y108 is an active-site residue. Fe cation contacts are provided by E163, E197, and H200.

It belongs to the ribonucleoside diphosphate reductase small chain family. As to quaternary structure, heterodimer of a large and a small subunit. Fe cation serves as cofactor.

The catalysed reaction is a 2'-deoxyribonucleoside 5'-diphosphate + [thioredoxin]-disulfide + H2O = a ribonucleoside 5'-diphosphate + [thioredoxin]-dithiol. Provides the precursors necessary for DNA synthesis. Catalyzes the biosynthesis of deoxyribonucleotides from the corresponding ribonucleotides. This chain is Ribonucleoside-diphosphate reductase small subunit (RNR2), found in Plasmodium falciparum (isolate FCR-3 / Gambia).